Reading from the N-terminus, the 164-residue chain is 6,7-dimethyl-8-ribityllumazine synthase (164 aa).

Residues F28, A62 to E64, and A86 to I88 contribute to the 5-amino-6-(D-ribitylamino)uracil site. Residue E91–T92 coordinates (2S)-2-hydroxy-3-oxobutyl phosphate. The active-site Proton donor is H94. N119 contacts 5-amino-6-(D-ribitylamino)uracil. R133 provides a ligand contact to (2S)-2-hydroxy-3-oxobutyl phosphate.

It belongs to the DMRL synthase family.

It carries out the reaction (2S)-2-hydroxy-3-oxobutyl phosphate + 5-amino-6-(D-ribitylamino)uracil = 6,7-dimethyl-8-(1-D-ribityl)lumazine + phosphate + 2 H2O + H(+). It functions in the pathway cofactor biosynthesis; riboflavin biosynthesis; riboflavin from 2-hydroxy-3-oxobutyl phosphate and 5-amino-6-(D-ribitylamino)uracil: step 1/2. Catalyzes the formation of 6,7-dimethyl-8-ribityllumazine by condensation of 5-amino-6-(D-ribitylamino)uracil with 3,4-dihydroxy-2-butanone 4-phosphate. This is the penultimate step in the biosynthesis of riboflavin. This is 6,7-dimethyl-8-ribityllumazine synthase from Nitrosomonas europaea (strain ATCC 19718 / CIP 103999 / KCTC 2705 / NBRC 14298).